The primary structure comprises 399 residues: Enoyl-[acyl-carrier-protein] reductase [NADH] 2 (399 aa).

Residues 48 to 53 (GASSGF), 75 to 76 (FE), 112 to 113 (DA), and 141 to 142 (LA) contribute to the NAD(+) site. Tyr-227 contacts substrate. The active-site Proton donor is Tyr-237. NAD(+)-binding positions include Lys-246 and 275–277 (LVT).

The protein belongs to the TER reductase family. Monomer.

It carries out the reaction a 2,3-saturated acyl-[ACP] + NAD(+) = a (2E)-enoyl-[ACP] + NADH + H(+). It functions in the pathway lipid metabolism; fatty acid biosynthesis. Involved in the final reduction of the elongation cycle of fatty acid synthesis (FAS II). Catalyzes the reduction of a carbon-carbon double bond in an enoyl moiety that is covalently linked to an acyl carrier protein (ACP). In Vibrio parahaemolyticus serotype O3:K6 (strain RIMD 2210633), this protein is Enoyl-[acyl-carrier-protein] reductase [NADH] 2.